We begin with the raw amino-acid sequence, 304 residues long: Mycothiol acetyltransferase (304 aa).

N-acetyltransferase domains lie at 16 to 155 and 164 to 304; these read AHVE…RTGL and VALS…YRRA. Residue Glu46 coordinates 1D-myo-inositol 2-(L-cysteinylamino)-2-deoxy-alpha-D-glucopyranoside. 87–89 contributes to the acetyl-CoA binding site; sequence LVV. 1D-myo-inositol 2-(L-cysteinylamino)-2-deoxy-alpha-D-glucopyranoside-binding residues include Glu190, Lys230, and Glu237. Acetyl-CoA contacts are provided by residues 241–243 and 248–254; these read LGV and AARGLGS. Tyr275 contributes to the 1D-myo-inositol 2-(L-cysteinylamino)-2-deoxy-alpha-D-glucopyranoside binding site.

The protein belongs to the acetyltransferase family. MshD subfamily. Monomer.

The catalysed reaction is 1D-myo-inositol 2-(L-cysteinylamino)-2-deoxy-alpha-D-glucopyranoside + acetyl-CoA = mycothiol + CoA + H(+). Its function is as follows. Catalyzes the transfer of acetyl from acetyl-CoA to desacetylmycothiol (Cys-GlcN-Ins) to form mycothiol. This chain is Mycothiol acetyltransferase, found in Clavibacter sepedonicus (Clavibacter michiganensis subsp. sepedonicus).